We begin with the raw amino-acid sequence, 302 residues long: MSVPDATVVKAFLLDLQNRICAGLEQLDGQASFAADSWTRTEGGGGTSRVLTQGAVFEQAGVNFSHVTGAAMPASATAHRPELAGRSFEAMGVSLVIHPKNPYIPTTHANVRFFIAHKDGADPVWWFGGGFDLTPYYPFEEDVREWHQTAKNLCLPFGDDVYPKYKKWCDEYFFLPHRNETRGVGGLFFDDLNQAGFDKSFDFMQAVGNGFLTAYAPIVERRKETPYGERERDFQLYRRGRYVEFNLVYDRGTLFGLQTGGRTESILMSMPPLVRWQYAYTPEAGSPEAELYDNYLKPRDWV.

Ser-94 serves as a coordination point for substrate. Residues His-98 and His-108 each coordinate a divalent metal cation. Catalysis depends on His-108, which acts as the Proton donor. Residue 110–112 (NVR) participates in substrate binding. A divalent metal cation contacts are provided by His-147 and His-177. The tract at residues 242–277 (YVEFNLVYDRGTLFGLQTGGRTESILMSMPPLVRWQ) is important for dimerization. 260–262 (GGR) serves as a coordination point for substrate.

It belongs to the aerobic coproporphyrinogen-III oxidase family. As to quaternary structure, homodimer. The cofactor is a divalent metal cation.

It localises to the cytoplasm. The catalysed reaction is coproporphyrinogen III + O2 + 2 H(+) = protoporphyrinogen IX + 2 CO2 + 2 H2O. It participates in porphyrin-containing compound metabolism; protoporphyrin-IX biosynthesis; protoporphyrinogen-IX from coproporphyrinogen-III (O2 route): step 1/1. Involved in the heme biosynthesis. Catalyzes the aerobic oxidative decarboxylation of propionate groups of rings A and B of coproporphyrinogen-III to yield the vinyl groups in protoporphyrinogen-IX. This is Oxygen-dependent coproporphyrinogen-III oxidase from Shewanella sp. (strain ANA-3).